Reading from the N-terminus, the 399-residue chain is Putative cytochrome P450 133B2 (399 aa).

Heme is bound at residue C348.

It belongs to the cytochrome P450 family. The cofactor is heme.

This Xylella fastidiosa (strain Temecula1 / ATCC 700964) protein is Putative cytochrome P450 133B2 (cyp133B2).